The primary structure comprises 467 residues: Glutamate--tRNA ligase (467 aa).

The 'HIGH' region motif lies at 9–19; sequence PSPTGYLHIGG. Residues 237 to 241 carry the 'KMSKS' region motif; sequence KLSKR. ATP is bound at residue lysine 240.

Belongs to the class-I aminoacyl-tRNA synthetase family. Glutamate--tRNA ligase type 1 subfamily. Monomer.

It is found in the cytoplasm. The enzyme catalyses tRNA(Glu) + L-glutamate + ATP = L-glutamyl-tRNA(Glu) + AMP + diphosphate. Its function is as follows. Catalyzes the attachment of glutamate to tRNA(Glu) in a two-step reaction: glutamate is first activated by ATP to form Glu-AMP and then transferred to the acceptor end of tRNA(Glu). This Xylella fastidiosa (strain M23) protein is Glutamate--tRNA ligase.